The chain runs to 85 residues: Small cysteine and glycine repeat-containing protein 5 (85 aa).

Residues 4–69 (CGCGGCGGCG…TCCSCGCGCG (66 aa)) form a 10 X 2 AA repeats of CG region.

This sequence belongs to the KRTAP type 28 family.

In terms of biological role, in the hair cortex, hair keratin intermediate filaments are embedded in an interfilamentous matrix, consisting of hair keratin-associated proteins (KRTAP), which are essential for the formation of a rigid and resistant hair shaft through their extensive disulfide bond cross-linking with abundant cysteine residues of hair keratins. The matrix proteins include the high-sulfur and high-glycine-tyrosine keratins. The protein is Small cysteine and glycine repeat-containing protein 5 of Homo sapiens (Human).